Reading from the N-terminus, the 292-residue chain is Acetyl-coenzyme A carboxylase carboxyl transferase subunit beta (292 aa).

The CoA carboxyltransferase N-terminal domain occupies 29-292 (LWVKCSECGQ…HGVKDLMGAN (264 aa)). Residues C33, C36, C52, and C55 each coordinate Zn(2+). A C4-type zinc finger spans residues 33 to 55 (CSECGQVAYRKDLISNFNVCSNC).

This sequence belongs to the AccD/PCCB family. As to quaternary structure, acetyl-CoA carboxylase is a heterohexamer composed of biotin carboxyl carrier protein (AccB), biotin carboxylase (AccC) and two subunits each of ACCase subunit alpha (AccA) and ACCase subunit beta (AccD). Zn(2+) is required as a cofactor.

It is found in the cytoplasm. The enzyme catalyses N(6)-carboxybiotinyl-L-lysyl-[protein] + acetyl-CoA = N(6)-biotinyl-L-lysyl-[protein] + malonyl-CoA. The protein operates within lipid metabolism; malonyl-CoA biosynthesis; malonyl-CoA from acetyl-CoA: step 1/1. In terms of biological role, component of the acetyl coenzyme A carboxylase (ACC) complex. Biotin carboxylase (BC) catalyzes the carboxylation of biotin on its carrier protein (BCCP) and then the CO(2) group is transferred by the transcarboxylase to acetyl-CoA to form malonyl-CoA. This is Acetyl-coenzyme A carboxylase carboxyl transferase subunit beta from Prochlorococcus marinus (strain MIT 9515).